Here is a 204-residue protein sequence, read N- to C-terminus: Recombination protein RecR (204 aa).

The C4-type zinc finger occupies 57 to 72; the sequence is CPTCFNYTDTDICRYC. One can recognise a Toprim domain in the interval 80–181; that stretch reads ESICVVEEPS…KLSRIAHGVP (102 aa).

It belongs to the RecR family.

Functionally, may play a role in DNA repair. It seems to be involved in an RecBC-independent recombinational process of DNA repair. It may act with RecF and RecO. This is Recombination protein RecR from Bdellovibrio bacteriovorus (strain ATCC 15356 / DSM 50701 / NCIMB 9529 / HD100).